The sequence spans 108 residues: PTS system fructose-like EIIB component 1 (108 aa).

Positions 1-101 (MSKKLIALCA…AAGIIKEIEE (101 aa)) constitute a PTS EIIB type-2 domain. Catalysis depends on cysteine 11, which acts as the Phosphocysteine intermediate. Cysteine 11 is subject to Phosphocysteine; by EIIA.

The protein resides in the cytoplasm. It catalyses the reaction D-fructose(out) + N(pros)-phospho-L-histidyl-[protein] = D-fructose 1-phosphate(in) + L-histidyl-[protein]. The phosphoenolpyruvate-dependent sugar phosphotransferase system (sugar PTS), a major carbohydrate active transport system, catalyzes the phosphorylation of incoming sugar substrates concomitantly with their translocation across the cell membrane. The enzyme II FryABC PTS system is involved in fructose transport. This chain is PTS system fructose-like EIIB component 1 (fryB), found in Shigella flexneri.